The primary structure comprises 375 residues: Trichodiene synthase (375 aa).

This sequence belongs to the trichodiene synthase family.

It catalyses the reaction (2E,6E)-farnesyl diphosphate = trichodiene + diphosphate. The protein operates within sesquiterpene biosynthesis; trichothecene biosynthesis. In terms of biological role, TS is a member of the terpene cyclase group of enzymes. It catalyzes the isomerization and cyclization of farnesyl pyro-phosphate to form trichodiene, the first cyclic intermediate in the biosynthetic pathway for trichothecenes. It serves to branch trichothecene biosynthesis from the isoprenoid pathway. This chain is Trichodiene synthase (TRI5), found in Fusarium asiaticum.